Consider the following 655-residue polypeptide: Large subunit GTPase 1 homolog (655 aa).

The segment at 1–31 is disordered; the sequence is MGRRRAPGGGSLGRVLIRHQTQRSRSHRHTD. A compositionally biased stretch (basic residues) spans 16–28; the sequence is LIRHQTQRSRSHR. Phosphoserine occurs at positions 93 and 97. The CP-type G domain occupies 164 to 441; it reads WRQLWRVIER…LCDCPGLVMP (278 aa). Residue 212-215 participates in GTP binding; the sequence is NKAD. S252 bears the Phosphoserine mark. The disordered stretch occupies residues 253 to 359; it reads KDEVNSVAGE…ENSQMSNKSH (107 aa). Positions 288–327 are enriched in acidic residues; that stretch reads EESESDDDDSEYEDCQEDEEEDWQTCSEEDSNPEEGQEEG. Residues 328–339 show a composition bias toward basic and acidic residues; it reads GCDRDQKEHGPE. The span at 344-359 shows a compositional bias: polar residues; it reads QSRASPENSQMSNKSH. GTP contacts are provided by residues 390 to 397 and 434 to 437; these read GYPNVGKS and DCPG. A disordered region spans residues 625–655; it reads SAENVPGKPWKKHGNRNKKEKSRRLYRHLDV. Over residues 633–655 the composition is skewed to basic residues; sequence PWKKHGNRNKKEKSRRLYRHLDV.

Belongs to the TRAFAC class YlqF/YawG GTPase family. LSG1 subfamily.

It localises to the cytoplasm. It is found in the endoplasmic reticulum. Its subcellular location is the nucleus. The protein resides in the cajal body. It carries out the reaction GTP + H2O = GDP + phosphate + H(+). In terms of biological role, functions as a GTPase. May act by mediating the release of NMD3 from the 60S ribosomal subunit after export into the cytoplasm during the 60S ribosomal subunit maturation. The chain is Large subunit GTPase 1 homolog from Rattus norvegicus (Rat).